A 259-amino-acid chain; its full sequence is Tryptophan synthase alpha chain (259 aa).

Active-site proton acceptor residues include E35 and D46.

The protein belongs to the TrpA family. As to quaternary structure, tetramer of two alpha and two beta chains.

It catalyses the reaction (1S,2R)-1-C-(indol-3-yl)glycerol 3-phosphate + L-serine = D-glyceraldehyde 3-phosphate + L-tryptophan + H2O. The protein operates within amino-acid biosynthesis; L-tryptophan biosynthesis; L-tryptophan from chorismate: step 5/5. The alpha subunit is responsible for the aldol cleavage of indoleglycerol phosphate to indole and glyceraldehyde 3-phosphate. The chain is Tryptophan synthase alpha chain from Methanococcus maripaludis (strain C5 / ATCC BAA-1333).